The chain runs to 465 residues: Hepatocyte nuclear factor 6 (465 aa).

2 disordered regions span residues 15–84 and 119–141; these read GVSH…GPLH and SDKFPHHHHHHHHHHHPHHHQRL. Residues 123–140 are compositionally biased toward basic residues; sequence PHHHHHHHHHHHPHHHQR. The segment at residues 283–369 is a DNA-binding region (CUT); it reads GSNSGQMEEI…QRMSALRLAA (87 aa). The segment at residues 385-444 is a DNA-binding region (homeobox); that stretch reads PKKPRLVFTDVQRRTLHAIFKENKRPSKELQITISQQLGLELSTVSNFFMNARRRSLDKW. The tract at residues 443-465 is disordered; that stretch reads KWQDEGGSNSGSSSSSSSTCTKA. The span at 448-465 shows a compositional bias: low complexity; the sequence is GGSNSGSSSSSSSTCTKA.

The protein belongs to the CUT homeobox family. Binds DNA as a monomer.

The protein localises to the nucleus. Its function is as follows. Transcriptional activator. Binds the consensus sequence 5'-DHWATTGAYTWWD-3' on a variety of gene promoters such as those of HNF3B and TTR. Important for liver genes transcription. Stimulates the expression of Onecut3 in the developing endoderm. In Mus musculus (Mouse), this protein is Hepatocyte nuclear factor 6 (Onecut1).